Reading from the N-terminus, the 371-residue chain is Queuine tRNA-ribosyltransferase (371 aa).

Asp-89 functions as the Proton acceptor in the catalytic mechanism. Substrate-binding positions include 89-93, Asp-143, Gln-185, and Gly-212; that span reads DSGGF. The tract at residues 243–249 is RNA binding; the sequence is GVGKPED. Asp-262 functions as the Nucleophile in the catalytic mechanism. Residues 267 to 271 are RNA binding; important for wobble base 34 recognition; it reads TRNAR. Positions 300, 302, 305, and 331 each coordinate Zn(2+).

Belongs to the queuine tRNA-ribosyltransferase family. As to quaternary structure, homodimer. Within each dimer, one monomer is responsible for RNA recognition and catalysis, while the other monomer binds to the replacement base PreQ1. Zn(2+) is required as a cofactor.

The enzyme catalyses 7-aminomethyl-7-carbaguanine + guanosine(34) in tRNA = 7-aminomethyl-7-carbaguanosine(34) in tRNA + guanine. It participates in tRNA modification; tRNA-queuosine biosynthesis. Catalyzes the base-exchange of a guanine (G) residue with the queuine precursor 7-aminomethyl-7-deazaguanine (PreQ1) at position 34 (anticodon wobble position) in tRNAs with GU(N) anticodons (tRNA-Asp, -Asn, -His and -Tyr). Catalysis occurs through a double-displacement mechanism. The nucleophile active site attacks the C1' of nucleotide 34 to detach the guanine base from the RNA, forming a covalent enzyme-RNA intermediate. The proton acceptor active site deprotonates the incoming PreQ1, allowing a nucleophilic attack on the C1' of the ribose to form the product. After dissociation, two additional enzymatic reactions on the tRNA convert PreQ1 to queuine (Q), resulting in the hypermodified nucleoside queuosine (7-(((4,5-cis-dihydroxy-2-cyclopenten-1-yl)amino)methyl)-7-deazaguanosine). The sequence is that of Queuine tRNA-ribosyltransferase from Thioalkalivibrio sulfidiphilus (strain HL-EbGR7).